A 481-amino-acid polypeptide reads, in one-letter code: Thyroid receptor-interacting protein 6 (481 aa).

Over residues 1-12 the composition is skewed to pro residues; that stretch reads MSGPTWLPPKQP. Residues 1 to 259 are disordered; that stretch reads MSGPTWLPPK…QVPLSQPPEE (259 aa). Arginine 25 bears the Asymmetric dimethylarginine; alternate mark. Residue arginine 25 is modified to Omega-N-methylarginine; alternate. Tyrosine 55 carries the phosphotyrosine; by SRC modification. The residue at position 92 (serine 92) is a Phosphoserine. Positions 108-122 are enriched in basic and acidic residues; sequence DGGRGHAPRRPDRQA. Arginine 111 carries the post-translational modification Omega-N-methylarginine. 2 stretches are compositionally biased toward low complexity: residues 153–173 and 183–193; these read SPYGAPTPASYATASTPAGPA and PVRGCGPPRRG. Residues arginine 185 and arginine 192 each carry the omega-N-methylarginine modification. Serine 195 is subject to Phosphoserine. An Omega-N-methylarginine modification is found at arginine 211. Positions 221 to 233 are enriched in basic and acidic residues; that stretch reads SHREPGPGVKEEA. Arginine 243 bears the Omega-N-methylarginine mark. Serine 254 is modified (phosphoserine). 3 LIM zinc-binding domains span residues 284–321, 344–403, and 404–472; these read CGGCGEDVVGDGAGVVALDRVFHVGCFVCSTCRAQLRG, CSTC…FAPR, and CSVC…RIQE. An interaction with MAGI1 and PTPN13 region spans residues 474 to 481; it reads SATVTTDC.

Belongs to the zyxin/ajuba family. Specifically interacts with the ligand binding domain of the thyroid receptor (TR) in the presence of thyroid hormone. Interacts (via the third LIM domain and C-terminus) with PTPN13 (via the second PDZ domain). Interacts (via the second LIM domain or via the third LIM domain plus C-terminus) with PDLIM4 (via PDZ domain). Found in a complex with PTPN13 and PDLIM4. Interacts with SVIL isoform 2. Interacts with LPAR2 but not other LPA receptors. Interacts with PRKAA2. Interacts with MAGI1. Interacts with SCRIB. Post-translationally, phosphorylation at Tyr-55 by SRC is required for enhancement of lysophosphatidic acid-induced cell migration. Tyr-55 is dephosphorylated by PTPN13.

It is found in the cytoplasm. The protein resides in the cytoskeleton. Its subcellular location is the cell junction. It localises to the focal adhesion. The protein localises to the nucleus. Functionally, relays signals from the cell surface to the nucleus to weaken adherens junction and promote actin cytoskeleton reorganization and cell invasiveness. Involved in lysophosphatidic acid-induced cell adhesion and migration. Acts as a transcriptional coactivator for NF-kappa-B and JUN, and mediates the transrepression of these transcription factors induced by glucocorticoid receptor. In Bos taurus (Bovine), this protein is Thyroid receptor-interacting protein 6 (TRIP6).